We begin with the raw amino-acid sequence, 469 residues long: Ribosomal protein uS12 methylthiotransferase RimO (469 aa).

One can recognise an MTTase N-terminal domain in the interval 34–144 (NKIGFVSLGC…VLEHVHQFAP (111 aa)). Residues cysteine 43, cysteine 79, cysteine 108, cysteine 176, cysteine 180, and cysteine 183 each coordinate [4Fe-4S] cluster. Positions 162 to 399 (LTPKHYAYLK…MLVQQEISAA (238 aa)) constitute a Radical SAM core domain. Residues 402-468 (QKRIGSTMKV…EYDLWGSLVR (67 aa)) enclose the TRAM domain.

Belongs to the methylthiotransferase family. RimO subfamily. [4Fe-4S] cluster serves as cofactor.

It localises to the cytoplasm. The catalysed reaction is L-aspartate(89)-[ribosomal protein uS12]-hydrogen + (sulfur carrier)-SH + AH2 + 2 S-adenosyl-L-methionine = 3-methylsulfanyl-L-aspartate(89)-[ribosomal protein uS12]-hydrogen + (sulfur carrier)-H + 5'-deoxyadenosine + L-methionine + A + S-adenosyl-L-homocysteine + 2 H(+). In terms of biological role, catalyzes the methylthiolation of an aspartic acid residue of ribosomal protein uS12. The polypeptide is Ribosomal protein uS12 methylthiotransferase RimO (Vibrio vulnificus (strain CMCP6)).